The chain runs to 441 residues: Tol-Pal system protein TolB (441 aa).

The first 23 residues, 1–23 (MRNAIATVLLGLAMLLPVGAVQA), serve as a signal peptide directing secretion. The interval 420-441 (RNLKPVKTPDGASDPSWSPLQN) is disordered.

Belongs to the TolB family. In terms of assembly, the Tol-Pal system is composed of five core proteins: the inner membrane proteins TolA, TolQ and TolR, the periplasmic protein TolB and the outer membrane protein Pal. They form a network linking the inner and outer membranes and the peptidoglycan layer.

The protein localises to the periplasm. In terms of biological role, part of the Tol-Pal system, which plays a role in outer membrane invagination during cell division and is important for maintaining outer membrane integrity. The sequence is that of Tol-Pal system protein TolB from Ruegeria sp. (strain TM1040) (Silicibacter sp.).